Consider the following 522-residue polypeptide: Lysine--tRNA ligase (522 aa).

The short motif at 44 to 52 (PSGLPHIGT) is the 'HIGH' region element. Positions 290-294 (KISKS) match the 'KMSKS' region motif. Lys293 provides a ligand contact to ATP.

It belongs to the class-I aminoacyl-tRNA synthetase family.

The protein resides in the cytoplasm. It carries out the reaction tRNA(Lys) + L-lysine + ATP = L-lysyl-tRNA(Lys) + AMP + diphosphate. This chain is Lysine--tRNA ligase, found in Rickettsia massiliae (strain Mtu5).